Reading from the N-terminus, the 344-residue chain is Methionine import ATP-binding protein MetN 1 (344 aa).

One can recognise an ABC transporter domain in the interval isoleucine 2–isoleucine 241. Residue glycine 38–serine 45 coordinates ATP.

Belongs to the ABC transporter superfamily. Methionine importer (TC 3.A.1.24) family. The complex is composed of two ATP-binding proteins (MetN), two transmembrane proteins (MetI) and a solute-binding protein (MetQ).

It is found in the cell inner membrane. The enzyme catalyses L-methionine(out) + ATP + H2O = L-methionine(in) + ADP + phosphate + H(+). It catalyses the reaction D-methionine(out) + ATP + H2O = D-methionine(in) + ADP + phosphate + H(+). Its function is as follows. Part of the ABC transporter complex MetNIQ involved in methionine import. Responsible for energy coupling to the transport system. The protein is Methionine import ATP-binding protein MetN 1 of Paraburkholderia xenovorans (strain LB400).